A 393-amino-acid polypeptide reads, in one-letter code: MAEAMDLGKDPNGPTHSSTLFVREDGSAMSFYVRPSSAKRRLSTLILHGGGTVCRVQEPGAVLLAQPGEALAEASGDFISTQYILDCVDRNEKLDLEAYRLGLTEQASDPKPGASTEGSTEPEPQPLTGRIAYTDAEDVAILTYVKENARSPSSVTGNALWKAMEKSSLTQHSWQSLKDRYLKHLRGQEHKYLLGNAPVSPSSQKLKRKAEQDPEAADSGEPQNKRAPDLPEEECVKGEIKENGEADNKLFEEAAPEFGEAVVDESPDFEIHITMCDGDPPTPEEDSETQPDEEEEEPKVSTQEVGTAIKVIRQLMEKFNLDLSTVTQALLKNSGELEATSSFLESGRRPDGYPIWCRQDDLDLQKDDDDTKNALVKKFGAQNVARRIEFRKK.

Ala2 bears the N-acetylalanine mark. 2 positions are modified to phosphoserine: Ser36 and Ser43. Positions 78–101 (FISTQYILDCVDRNEKLDLEAYRL) constitute a BRCT domain. The interval 104–132 (TEQASDPKPGASTEGSTEPEPQPLTGRIA) is disordered. Lys111 is covalently cross-linked (Glycyl lysine isopeptide (Lys-Gly) (interchain with G-Cter in SUMO2)). Residues 125-185 (QPLTGRIAYT…SLKDRYLKHL (61 aa)) enclose the Myb-like domain. Phosphoserine is present on residues Ser151 and Ser153. Lys191 participates in a covalent cross-link: Glycyl lysine isopeptide (Lys-Gly) (interchain with G-Cter in SUMO2). The disordered stretch occupies residues 193 to 304 (LLGNAPVSPS…EEEPKVSTQE (112 aa)). A phosphoserine mark is found at Ser200 and Ser203. Glycyl lysine isopeptide (Lys-Gly) (interchain with G-Cter in SUMO2) cross-links involve residues Lys205, Lys209, and Lys237. Basic and acidic residues predominate over residues 223 to 252 (QNKRAPDLPEEECVKGEIKENGEADNKLFE). The segment covering 282–297 (TPEEDSETQPDEEEEE) has biased composition (acidic residues). Lys366 participates in a covalent cross-link: Glycyl lysine isopeptide (Lys-Gly) (interchain with G-Cter in SUMO2). The short motif at 377–393 (KKFGAQNVARRIEFRKK) is the Nuclear localization signal element.

It belongs to the RAP1 family. In terms of assembly, homodimer. Component of the shelterin complex (telosome) composed of TERF1, TERF2, TINF2, TERF2IP ACD and POT1. Binds to TERF2 (but not TERF1) with its C-terminus. Interacts with SLX4/BTBD12. Interacts with TERF2; the interaction is direct. Does not interact with TERF1. Associates with the I-kappa-B-kinase (IKK) core complex, composed of CHUK, IKBKB and IKBKG.

Its subcellular location is the nucleus. It localises to the cytoplasm. It is found in the chromosome. The protein resides in the telomere. Functionally, acts both as a regulator of telomere function and as a transcription regulator. Involved in the regulation of telomere length and protection as a component of the shelterin complex (telosome). In contrast to other components of the shelterin complex, it is dispensible for telomere capping and does not participate in the protection of telomeres against non-homologous end-joining (NHEJ)-mediated repair. Instead, it is required to negatively regulate telomere recombination and is essential for repressing homology-directed repair (HDR), which can affect telomere length. Does not bind DNA directly: recruited to telomeric double-stranded 5'-TTAGGG-3' repeats via its interaction with TERF2. Independently of its function in telomeres, also acts as a transcription regulator: recruited to extratelomeric 5'-TTAGGG-3' sites via its association with TERF2 or other factors, and regulates gene expression. When cytoplasmic, associates with the I-kappa-B-kinase (IKK) complex and acts as a regulator of the NF-kappa-B signaling by promoting IKK-mediated phosphorylation of RELA/p65, leading to activate expression of NF-kappa-B target genes. The polypeptide is Telomeric repeat-binding factor 2-interacting protein 1 (Terf2ip) (Mus musculus (Mouse)).